The chain runs to 856 residues: Glucans biosynthesis glucosyltransferase H (856 aa).

Transmembrane regions (helical) follow at residues 144–164 (ILLV…KGIM), 198–218 (ILIM…TALM), 517–537 (VFLT…FLVL), 574–594 (LFST…ILIW), 608–628 (TLSM…RMIF), and 691–711 (IVGS…VGLG).

It belongs to the glycosyltransferase 2 family. OpgH subfamily.

The protein localises to the cell inner membrane. The protein operates within glycan metabolism; osmoregulated periplasmic glucan (OPG) biosynthesis. Involved in the biosynthesis of osmoregulated periplasmic glucans (OPGs). This chain is Glucans biosynthesis glucosyltransferase H, found in Pseudomonas fluorescens (strain Pf0-1).